We begin with the raw amino-acid sequence, 335 residues long: Tetraacyldisaccharide 4'-kinase (335 aa).

An ATP-binding site is contributed by 58-65 (TVGGSGKT).

The protein belongs to the LpxK family.

It carries out the reaction a lipid A disaccharide + ATP = a lipid IVA + ADP + H(+). Its pathway is glycolipid biosynthesis; lipid IV(A) biosynthesis; lipid IV(A) from (3R)-3-hydroxytetradecanoyl-[acyl-carrier-protein] and UDP-N-acetyl-alpha-D-glucosamine: step 6/6. Transfers the gamma-phosphate of ATP to the 4'-position of a tetraacyldisaccharide 1-phosphate intermediate (termed DS-1-P) to form tetraacyldisaccharide 1,4'-bis-phosphate (lipid IVA). The protein is Tetraacyldisaccharide 4'-kinase of Shewanella sp. (strain MR-7).